Reading from the N-terminus, the 829-residue chain is High affinity cAMP-specific and IBMX-insensitive 3',5'-cyclic phosphodiesterase 8A (829 aa).

The disordered stretch occupies residues 16–46 (EDAPSPAAPPLSSGGPRLPQGQKTAALPRTR). The residue at position 20 (Ser-20) is a Phosphoserine. The PAS domain maps to 213-283 (ACNSVFTALE…DTINSCIRIG (71 aa)). In terms of domain architecture, PAC spans 287 to 329 (QGIYYAKKKNGDNIQQNVKIIPVIGQGGKIRHYVSIIRVCNGN). The tract at residues 341–360 (SDTHTDNQTGKHKDRRKGSL) is disordered. Ser-359 carries the post-translational modification Phosphoserine; by PKA. Phosphoserine is present on residues Ser-386 and Ser-457. The tract at residues 454 to 461 (RRLSGNEY) is involved in RAF1-binding. Position 461 is a phosphotyrosine (Tyr-461). Residues 480-820 (SLDDVPPRIA…KYWKGLDEMK (341 aa)) enclose the PDEase domain. The active-site Proton donor is the His-556. A divalent metal cation-binding residues include His-560, His-596, Asp-597, and Asp-726.

The protein belongs to the cyclic nucleotide phosphodiesterase family. PDE8 subfamily. In terms of assembly, interacts with RAF1. The interaction promotes RAF1 activity. A divalent metal cation serves as cofactor. In terms of processing, phosphorylated at Ser-359 by PKA under elevated cAMP conditions, this enhances catalytic activity. Expressed in most tissues except thymus and peripheral blood leukocytes. Highest levels in testis, ovary, small intestine and colon.

The catalysed reaction is 3',5'-cyclic AMP + H2O = AMP + H(+). It functions in the pathway purine metabolism; 3',5'-cyclic AMP degradation; AMP from 3',5'-cyclic AMP: step 1/1. Inhibited by dipyridimole. Insensitive to selective PDE inhibitors including rolipram and zaprinast as well as to the non-selective inhibitor, IBMX. Unaffected by cGMP. Its function is as follows. Hydrolyzes the second messenger cAMP, which is a key regulator of many important physiological processes. May be involved in maintaining basal levels of the cyclic nucleotide and/or in the cAMP regulation of germ cell development. Binding to RAF1 reduces RAF1 'Ser-259' inhibitory-phosphorylation and stimulates RAF1-dependent EGF-activated ERK-signaling. Protects against cell death induced by hydrogen peroxide and staurosporine. In Homo sapiens (Human), this protein is High affinity cAMP-specific and IBMX-insensitive 3',5'-cyclic phosphodiesterase 8A (PDE8A).